We begin with the raw amino-acid sequence, 29 residues long: Kalata-B15 (29 aa).

Positions 1 to 29 (GLPVCGESCFGGSCYTPGCSCTWPICTRD) form a cross-link, cyclopeptide (Gly-Asp). Cystine bridges form between cysteine 5/cysteine 19, cysteine 9/cysteine 21, and cysteine 14/cysteine 26.

Post-translationally, this is a cyclic peptide.

Its function is as follows. Probably participates in a plant defense mechanism. This is Kalata-B15 from Oldenlandia affinis.